Here is a 1035-residue protein sequence, read N- to C-terminus: Beta-galactosidase (1035 aa).

Substrate is bound by residues N101 and D199. Residue D199 participates in Na(+) binding. 3 residues coordinate Mg(2+): E415, H417, and E460. Residues E460 and 540–543 (EYAH) contribute to the substrate site. The active-site Proton donor is E460. E540 functions as the Nucleophile in the catalytic mechanism. Position 600 (N600) interacts with Mg(2+). Residues F604 and N607 each contribute to the Na(+) site. 2 residues coordinate substrate: N607 and W1011.

It belongs to the glycosyl hydrolase 2 family. As to quaternary structure, homotetramer. The cofactor is Mg(2+). It depends on Na(+) as a cofactor.

The catalysed reaction is Hydrolysis of terminal non-reducing beta-D-galactose residues in beta-D-galactosides.. The sequence is that of Beta-galactosidase from Psychromonas ingrahamii (strain DSM 17664 / CCUG 51855 / 37).